The following is a 678-amino-acid chain: NADPH--cytochrome P450 reductase (678 aa).

Glycine 2 carries the N-acetylglycine modification. Residues 2–22 (GDSNVDTGTTTSEMVAEEVSL) are Lumenal-facing. Residues 23 to 43 (FSATDMVLFSLIVGLLTYWFI) traverse the membrane as a helical segment. The Cytoplasmic segment spans residues 44–678 (FRKKKDEVPE…KGRYSLDVWS (635 aa)). Residue serine 63 is modified to Phosphoserine. One can recognise a Flavodoxin-like domain in the interval 80–224 (IIVFYGSQTG…DFITWREQFW (145 aa)). FMN is bound by residues 86 to 91 (SQTGTA), 138 to 141 (ATYG), 173 to 182 (LGNKTYEHFN), and aspartate 208. One can recognise an FAD-binding FR-type domain in the interval 279–521 (KNPFLAVVTT…FVRKSQFRLP (243 aa)). Arginine 298 contributes to the NADP(+) binding site. FAD-binding positions include arginine 424, 454–457 (RYYS), 472–474 (CAV), tyrosine 478, and 488–491 (GVAT). NADP(+) contacts are provided by residues threonine 535, 596–597 (SR), 602–606 (KVYVQ), and aspartate 639. Residue tryptophan 677 participates in FAD binding.

The protein belongs to the NADPH--cytochrome P450 reductase family. It in the N-terminal section; belongs to the flavodoxin family. In the C-terminal section; belongs to the flavoprotein pyridine nucleotide cytochrome reductase family. FAD is required as a cofactor. The cofactor is FMN.

It localises to the endoplasmic reticulum membrane. It carries out the reaction 2 oxidized [cytochrome P450] + NADPH = 2 reduced [cytochrome P450] + NADP(+) + H(+). This enzyme is required for electron transfer from NADP to cytochrome P450 in microsomes. It can also provide electron transfer to heme oxygenase and cytochrome B5. The chain is NADPH--cytochrome P450 reductase from Sus scrofa (Pig).